The following is a 1220-amino-acid chain: DNA-directed RNA polymerase subunit beta' (1220 aa).

Positions 61, 63, 76, and 79 each coordinate Zn(2+). Residues D450, D452, and D454 each coordinate Mg(2+). A disordered region spans residues 1197–1220; sequence QPEVEQEPTPDIPKLDDVAKSFEE. Positions 1209-1220 are enriched in basic and acidic residues; that stretch reads PKLDDVAKSFEE.

The protein belongs to the RNA polymerase beta' chain family. As to quaternary structure, the RNAP catalytic core consists of 2 alpha, 1 beta, 1 beta' and 1 omega subunit. When a sigma factor is associated with the core the holoenzyme is formed, which can initiate transcription. The cofactor is Mg(2+). Zn(2+) serves as cofactor.

It carries out the reaction RNA(n) + a ribonucleoside 5'-triphosphate = RNA(n+1) + diphosphate. DNA-dependent RNA polymerase catalyzes the transcription of DNA into RNA using the four ribonucleoside triphosphates as substrates. This chain is DNA-directed RNA polymerase subunit beta', found in Leuconostoc citreum (strain KM20).